Here is a 616-residue protein sequence, read N- to C-terminus: Sodium- and chloride-dependent transporter XTRP3 (616 aa).

The segment covering 1–11 has biased composition (basic residues); the sequence is MRLAIKRRASR. Residues 1-26 are disordered; that stretch reads MRLAIKRRASRGQRPGPDEKRARDME. Residues 1-37 lie on the Cytoplasmic side of the membrane; the sequence is MRLAIKRRASRGQRPGPDEKRARDMEKARPQWGNPLQ. The span at 16–26 shows a compositional bias: basic and acidic residues; it reads GPDEKRARDME. Residues 38 to 58 form a helical membrane-spanning segment; sequence FVFACISYAVGLGNVWRFPYL. Residues 59 to 66 are Extracellular-facing; the sequence is CQMYGGGS. The chain crosses the membrane as a helical span at residues 67-87; the sequence is FLVPYLIMLIVEGMPLLYLEL. At 88–103 the chain is on the cytoplasmic side; it reads AVGQRMRQGSIGAWRT. Residues 104 to 124 traverse the membrane as a helical segment; that stretch reads ISPYLSGVGVASVVVSFFLSM. Over 125–189 the chain is Extracellular; sequence YYNVINAWGF…ISPSIQENGG (65 aa). Residue Asn155 is glycosylated (N-linked (GlcNAc...) asparagine). A helical membrane pass occupies residues 190–210; that stretch reads VQWEPALCLTLAWLMVYLCIL. Residues 211–218 lie on the Cytoplasmic side of the membrane; sequence RGTESTGK. Residues 219–239 form a helical membrane-spanning segment; sequence VVYFTALMPYCVLIIYLVRGL. The Extracellular portion of the chain corresponds to 240-265; the sequence is TLHGATNGLMYMFTPKIEQLANPKAW. A helical transmembrane segment spans residues 266 to 286; sequence INAATQIFFSLGLGFGSLIAF. The Cytoplasmic segment spans residues 287–300; that stretch reads ASYNEPSNDCQKHA. The chain crosses the membrane as a helical span at residues 301 to 321; sequence VIVSVINSSTSIFASIVTFSI. Residues 322–413 lie on the Extracellular side of the membrane; that stretch reads YGFKATFNYE…EAIKNMEVSQ (92 aa). The N-linked (GlcNAc...) asparagine glycan is linked to Asn381. The helical transmembrane segment at 414-434 threads the bilayer; the sequence is LWSVLYFFMLLMLGMGSMLGN. The Cytoplasmic portion of the chain corresponds to 435-455; sequence TAAILTPLTDSKVISSYLPKE. A helical transmembrane segment spans residues 456 to 476; sequence AISGLVCLINCAVGMVFTMEA. Residues 477-489 lie on the Extracellular side of the membrane; it reads GNYWFDIFNDYAA. Residues 490–510 form a helical membrane-spanning segment; the sequence is TLSLLLIVLVETIAVCYVYGL. Topologically, residues 511-533 are cytoplasmic; that stretch reads RRFESDLRAMTGRPLNWYWKAMW. The chain crosses the membrane as a helical span at residues 534-554; sequence AFVSPLLIIGLFIFYLSDYIL. At 555–578 the chain is on the extracellular side; it reads TGTLQYQAWDATQGQLVTKDYPPH. The helical transmembrane segment at 579–599 threads the bilayer; the sequence is ALAVIGLLVASSTMCIPLVAL. The Cytoplasmic segment spans residues 600 to 616; that stretch reads GTFIRNRLKRGGSSPVA.

It belongs to the sodium:neurotransmitter symporter (SNF) (TC 2.A.22) family. SLC6A20 subfamily. In terms of tissue distribution, highly expressed in epithelial cells of duodenum, jejunum, ileum, stomach, cecum, colon and kidney proximal tubule. Also expressed in the choroid plexus, microglia and meniges of the brain and in the ovary.

It localises to the apical cell membrane. The catalysed reaction is L-proline(out) + chloride(out) + 2 Na(+)(out) = L-proline(in) + chloride(in) + 2 Na(+)(in). It catalyses the reaction 4-hydroxy-L-proline(out) + chloride(out) + 2 Na(+)(out) = 4-hydroxy-L-proline(in) + chloride(in) + 2 Na(+)(in). The enzyme catalyses 2-methyl-2-(methylamino)propanoate(out) + chloride(out) + 2 Na(+)(out) = 2-methyl-2-(methylamino)propanoate(in) + chloride(in) + 2 Na(+)(in). It carries out the reaction L-pipecolate(out) + chloride(out) + 2 Na(+)(out) = L-pipecolate(in) + chloride(in) + 2 Na(+)(in). The catalysed reaction is glycine betaine(out) + chloride(out) + 2 Na(+)(out) = glycine betaine(in) + chloride(in) + 2 Na(+)(in). It catalyses the reaction glycine(out) + chloride(out) + 2 Na(+)(out) = glycine(in) + chloride(in) + 2 Na(+)(in). In terms of biological role, mediates the Na(+)- and Cl(-)-dependent uptake of imino acids such as L-proline, N-methyl-L-proline and pipecolate as well as N-methylated amino acids. Also transports glycine, regulates proline and glycine homeostasis in the brain playing a role in the modulation of NMDAR currents. The chain is Sodium- and chloride-dependent transporter XTRP3 from Rattus norvegicus (Rat).